The chain runs to 470 residues: Growth/differentiation factor 6 (470 aa).

A signal peptide spans 1–22 (MDTSRVLLSAVFLISFLWDLPG). A propeptide spanning residues 23–350 (FQQASISSSS…SPSPGRRRRR (328 aa)) is cleaved from the precursor. Positions 28-98 (ISSSSSSAEL…REPPGRGPRV (71 aa)) are disordered. Over residues 45-80 (SRKEGRMPRAPRENATAREPLDRQEPPPRPQEEPQR) the composition is skewed to basic and acidic residues. An N-linked (GlcNAc...) asparagine glycan is attached at asparagine 120. 2 disordered regions span residues 247–272 (PGAAEDEARAPGPQQPPPPDLRSLGF) and 308–366 (TEVV…KKSR). Pro residues predominate over residues 321 to 333 (GPPPPPPPPPPSG). Over residues 345–366 (GRRRRRTAFASRHGKRHGKKSR) the composition is skewed to basic residues. Cystine bridges form between cysteine 369/cysteine 435, cysteine 398/cysteine 467, and cysteine 402/cysteine 469.

It belongs to the TGF-beta family. As to quaternary structure, homodimer; disulfide-linked.

It localises to the secreted. Its function is as follows. Growth factor that controls proliferation and cellular differentiation in the retina and bone formation. Plays a key role in regulating apoptosis during retinal development. Establishes dorsal-ventral positional information in the retina and controls the formation of the retinotectal map. Required for normal formation of bones and joints in the limbs, skull, digits and axial skeleton. Plays a key role in establishing boundaries between skeletal elements during development. Regulation of GDF6 expression seems to be a mechanism for evolving species-specific changes in skeletal structures. Seems to positively regulate differentiation of chondrogenic tissue through the growth factor receptors subunits BMPR1A, BMPR1B, BMPR2 and ACVR2A, leading to the activation of SMAD1-SMAD5-SMAD8 complex. The regulation of chondrogenic differentiation is inhibited by NOG. Also involved in the induction of adipogenesis from mesenchymal stem cells. This mechanism acts through the growth factor receptors subunits BMPR1A, BMPR2 and ACVR2A and the activation of SMAD1-SMAD5-SMAD8 complex and MAPK14/p38. The chain is Growth/differentiation factor 6 (GDF6) from Bos taurus (Bovine).